A 192-amino-acid polypeptide reads, in one-letter code: uncharacterized protein (192 aa).

In terms of domain architecture, Nudix hydrolase spans Arg29–Ser160. The short motif at Gly67–Ala89 is the Nudix box element. Mg(2+) contacts are provided by Glu83 and Glu87.

It belongs to the Nudix hydrolase family. PCD1 subfamily. It depends on Mn(2+) as a cofactor. Requires Mg(2+) as cofactor.

Its function is as follows. Probably mediates the hydrolysis of some nucleoside diphosphate derivatives. This is an uncharacterized protein from Citrobacter koseri (strain ATCC BAA-895 / CDC 4225-83 / SGSC4696).